We begin with the raw amino-acid sequence, 278 residues long: HTH-type transcriptional regulator HdfR (278 aa).

Positions 1–58 (MDTELLKTFLEVSRTRHFGRAAEALYLTQSAVSFRIRQLENQLGVNLFTRHRNNIRLT) constitute an HTH lysR-type domain. A DNA-binding region (H-T-H motif) is located at residues 18–37 (FGRAAEALYLTQSAVSFRIR).

It belongs to the LysR transcriptional regulatory family.

In terms of biological role, negatively regulates the transcription of the flagellar master operon flhDC by binding to the upstream region of the operon. The protein is HTH-type transcriptional regulator HdfR of Salmonella agona (strain SL483).